The sequence spans 426 residues: 3-phosphoshikimate 1-carboxyvinyltransferase (426 aa).

3-phosphoshikimate contacts are provided by K22, S23, and R27. K22 contributes to the phosphoenolpyruvate binding site. Phosphoenolpyruvate-binding residues include G96 and R124. 3-phosphoshikimate is bound by residues S170, S171, Q172, S198, D314, N337, and K341. Position 172 (Q172) interacts with phosphoenolpyruvate. Catalysis depends on D314, which acts as the Proton acceptor. The phosphoenolpyruvate site is built by R345, R387, and K412.

This sequence belongs to the EPSP synthase family. Monomer.

It is found in the cytoplasm. It carries out the reaction 3-phosphoshikimate + phosphoenolpyruvate = 5-O-(1-carboxyvinyl)-3-phosphoshikimate + phosphate. It functions in the pathway metabolic intermediate biosynthesis; chorismate biosynthesis; chorismate from D-erythrose 4-phosphate and phosphoenolpyruvate: step 6/7. Catalyzes the transfer of the enolpyruvyl moiety of phosphoenolpyruvate (PEP) to the 5-hydroxyl of shikimate-3-phosphate (S3P) to produce enolpyruvyl shikimate-3-phosphate and inorganic phosphate. The chain is 3-phosphoshikimate 1-carboxyvinyltransferase from Shewanella baltica (strain OS185).